A 322-amino-acid polypeptide reads, in one-letter code: Phosphoserine phosphatase (322 aa).

Residue 10–12 (PED) coordinates substrate. Residues D12, D116, and D118 each contribute to the Mg(2+) site. D116 functions as the Nucleophile in the catalytic mechanism. Catalysis depends on D118, which acts as the Proton donor. Substrate-binding positions include E125, R161, 204-205 (SG), and K249. D272 contributes to the Mg(2+) binding site. A substrate-binding site is contributed by N275.

Belongs to the HAD-like hydrolase superfamily. SerB family. The cofactor is Mg(2+).

It carries out the reaction O-phospho-L-serine + H2O = L-serine + phosphate. The catalysed reaction is O-phospho-D-serine + H2O = D-serine + phosphate. Its pathway is amino-acid biosynthesis; L-serine biosynthesis; L-serine from 3-phospho-D-glycerate: step 3/3. Its function is as follows. Catalyzes the dephosphorylation of phosphoserine (P-Ser). The protein is Phosphoserine phosphatase (serB) of Escherichia coli O157:H7.